Reading from the N-terminus, the 226-residue chain is UPF0173 metal-dependent hydrolase CHY_0920 (226 aa).

Belongs to the UPF0173 family.

This is UPF0173 metal-dependent hydrolase CHY_0920 from Carboxydothermus hydrogenoformans (strain ATCC BAA-161 / DSM 6008 / Z-2901).